The primary structure comprises 118 residues: Large ribosomal subunit protein uL18 (118 aa).

Belongs to the universal ribosomal protein uL18 family. Part of the 50S ribosomal subunit; part of the 5S rRNA/L5/L18/L25 subcomplex. Contacts the 5S and 23S rRNAs.

In terms of biological role, this is one of the proteins that bind and probably mediate the attachment of the 5S RNA into the large ribosomal subunit, where it forms part of the central protuberance. In Helicobacter pylori (strain J99 / ATCC 700824) (Campylobacter pylori J99), this protein is Large ribosomal subunit protein uL18.